Here is a 517-residue protein sequence, read N- to C-terminus: Nectin-1 (517 aa).

Positions 1-30 (MARMGLAGAAGRWWGLALGLTAFFLPGVHS) are cleaved as a signal peptide. The 111-residue stretch at 31–141 (QVVQVNDSMY…GNRESQLNLT (111 aa)) folds into the Ig-like V-type domain. Residues 31–355 (QVVQVNDSMY…GRRAGPVPTA (325 aa)) lie on the Extracellular side of the membrane. N-linked (GlcNAc...) asparagine glycosylation is found at Asn-36, Asn-72, and Asn-139. Residues Cys-51 and Cys-124 are joined by a disulfide bond. Ig-like C2-type domains are found at residues 149–238 (WIEG…FKES) and 247–334 (PEVT…VNIT). 2 disulfide bridges follow: Cys-172–Cys-226 and Cys-269–Cys-316. Asn-202 carries N-linked (GlcNAc...) (complex) asparagine glycosylation. The tract at residues 282–299 (WTTLNGSLPKGVEAQNRT) is interaction with FGFR. N-linked (GlcNAc...) asparagine glycans are attached at residues Asn-286, Asn-297, Asn-307, and Asn-332. Residues 356-376 (IIGGVAGSILLVLIVVGGIVV) traverse the membrane as a helical segment. At 377-517 (ALRRRRHTFK…SFISKKEWYV (141 aa)) the chain is on the cytoplasmic side. Residues 399 to 488 (GYSKAGIPQH…DGYGDRTLGY (90 aa)) are disordered. Residues Ser-422, Ser-434, and Ser-435 each carry the phosphoserine modification. Phosphotyrosine is present on Tyr-436. Acidic residues predominate over residues 436–445 (YEEEEEEEEG). Residues 449–466 (GERKVGGPHPKYDEDAKR) are compositionally biased toward basic and acidic residues. A Phosphoserine modification is found at Ser-511.

The protein belongs to the nectin family. As to quaternary structure, cis- and trans-homodimer. Can form trans-heterodimers with NECTIN3 and with NECTIN4. Interaction between NECTIN1 and NECTIN3 on the pre- and postsynaptic sites, respectively, initiates the formation of puncta adherentia junctions between axons and dendrites. Interacts (via cytoplasmic domain) with AFDN (via PDZ domain); this interaction recruits NECTIN1 to cadherin-based adherens junctions and provides a connection with the actin cytoskeleton. Interacts with integrin alphaV/beta3. Interacts (via Ig-like C2-type domain 2) with FGFR1, FGFR2 and FGFR3. (Microbial infection) Interacts with herpes simplex virus 1/HHV-1, herpes simplex virus 2/HHV-2, and pseudorabies virus/PRV envelope glycoprotein D. (Microbial infection) Ubiquitinated by CBL following infection by herpes simplex virus 1/HHV-1 and association with HHV-1 envelope glycoprotein D, leading to its removal from cell surface.

It is found in the cell membrane. Its subcellular location is the cell junction. It localises to the adherens junction. The protein localises to the presynaptic cell membrane. The protein resides in the secreted. Functionally, cell adhesion molecule that promotes cell-cell contacts and plays important roles in the development of the nervous system. Acts by forming homophilic or heterophilic trans-dimers. Heterophilic interactions have been detected between NECTIN1 and NECTIN3 and between NECTIN1 and NECTIN4. Involved in axon guidance by promoting contacts between the commissural axons and the floor plate cells. Involved in synaptogegesis. Has some neurite outgrowth-promoting activity. Promotes formation of checkerboard-like cellular pattern of hair cells and supporting cells in the auditory epithelium via heterophilic interaction with NECTIN3: NECTIN1 is present in the membrane of hair cells and associates with NECTIN3 on supporting cells, thereby mediating heterotypic adhesion between these two cell types. Required for enamel mineralization. Its function is as follows. (Microbial infection) Acts as a receptor for herpes simplex virus 1/HHV-1, herpes simplex virus 2/HHV-2, and pseudorabies virus/PRV. Constitutes the major receptor for herpes simplex virus 1/HHV-1 entry into host cells. The protein is Nectin-1 of Homo sapiens (Human).